Reading from the N-terminus, the 281-residue chain is E3 ubiquitin-protein ligase MARCHF5 (281 aa).

An RING-CH-type zinc finger spans residues 9-78 (LPQTMDRSCW…PQCNAEYLIV (70 aa)). Positions 17, 20, 36, 38, 46, 49, 68, and 71 each coordinate Zn(2+). 4 consecutive transmembrane segments (helical) span residues 102–122 (FAAAGIMVGSIYWTAVTYGAV), 142–162 (PLFLLIGLPTIPVMLILGKMI), 212–232 (ILCGALVFPTIATIVGKLMFS), and 241–261 (TILGGIAFVAIKGAFKVYFKQ).

The protein resides in the mitochondrion outer membrane. Its subcellular location is the endoplasmic reticulum membrane. It catalyses the reaction S-ubiquitinyl-[E2 ubiquitin-conjugating enzyme]-L-cysteine + [acceptor protein]-L-lysine = [E2 ubiquitin-conjugating enzyme]-L-cysteine + N(6)-ubiquitinyl-[acceptor protein]-L-lysine.. Its pathway is protein modification; protein ubiquitination. Functionally, mitochondrial E3 ubiquitin-protein ligase that plays a crucial role in the control of mitochondrial morphology by acting as a positive regulator of mitochondrial fission. May play a role in the prevention of cell senescence acting as a regulator of mitochondrial quality control. In Gallus gallus (Chicken), this protein is E3 ubiquitin-protein ligase MARCHF5 (MARCHF5).